Consider the following 135-residue polypeptide: Probable holin (135 aa).

A run of 2 helical transmembrane segments spans residues leucine 24–tryptophan 41 and phenylalanine 62–alanine 84.

It belongs to the bacteriophage holin family. Cp-1 holin subfamily.

The protein localises to the host membrane. In terms of biological role, produces a lesion in the cytoplasmic membrane allowing the phage lysosyme to attack the peptidoglycan. The protein is Probable holin (45) of Bacillus phage phi105 (Bacteriophage phi-105).